The primary structure comprises 532 residues: Undecaprenyl-phosphate glucose phosphotransferase (532 aa).

The next 5 helical transmembrane spans lie at 81 to 101, 110 to 130, 155 to 175, 183 to 203, and 344 to 364; these read QVVVLSDAFCVCLAVVACIAW, ELSGALLLANIMAAGAFFLFP, VAFGEVVFCTVLVMLSWPFGV, WLTFVVAILFVERCVGTYILH, and TASVLLLLALAPLLTLVALAI.

The protein belongs to the bacterial sugar transferase family.

It is found in the membrane. The enzyme catalyses di-trans,octa-cis-undecaprenyl phosphate + UDP-alpha-D-glucose = alpha-D-glucosyl di-trans,octa-cis-undecaprenyl diphosphate + UMP. Involved in the biosynthesis of the exopolysaccharide acetan, a water-soluble polysaccharide involved in production of bacterial cellulose (BC). The sequence is that of Undecaprenyl-phosphate glucose phosphotransferase (aceA) from Komagataeibacter xylinus (Gluconacetobacter xylinus).